A 301-amino-acid polypeptide reads, in one-letter code: Homoserine O-acetyltransferase (301 aa).

Catalysis depends on Cys-142, which acts as the Acyl-thioester intermediate. Residues Lys-163 and Ser-192 each coordinate substrate. His-235 (proton acceptor) is an active-site residue. Glu-237 is an active-site residue. Arg-249 provides a ligand contact to substrate.

The protein belongs to the MetA family.

It localises to the cytoplasm. It carries out the reaction L-homoserine + acetyl-CoA = O-acetyl-L-homoserine + CoA. Its pathway is amino-acid biosynthesis; L-methionine biosynthesis via de novo pathway; O-acetyl-L-homoserine from L-homoserine: step 1/1. In terms of biological role, transfers an acetyl group from acetyl-CoA to L-homoserine, forming acetyl-L-homoserine. In Lachnoclostridium phytofermentans (strain ATCC 700394 / DSM 18823 / ISDg) (Clostridium phytofermentans), this protein is Homoserine O-acetyltransferase.